A 115-amino-acid polypeptide reads, in one-letter code: Probable non-functional T cell receptor beta variable 7-3 (115 aa).

The N-terminal stretch at 1–21 (MGTRLLCWAALCLLGADHTGA) is a signal peptide. An Ig-like domain is found at 22 to 115 (GVSQTPSNKV…SAAYLRASSL (94 aa)).

Most probably, the alpha-beta TR is not assembled due to incorrect folding of the beta chain. Alpha-beta TR is a heterodimer composed of an alpha and beta chain; disulfide-linked. The alpha-beta TR is associated with the transmembrane signaling CD3 coreceptor proteins to form the TR-CD3 (TcR or TCR). The assembly of alpha-beta TR heterodimers with CD3 occurs in the endoplasmic reticulum where a single alpha-beta TR heterodimer associates with one CD3D-CD3E heterodimer, one CD3G-CD3E heterodimer and one CD247 homodimer forming a stable octameric structure. CD3D-CD3E and CD3G-CD3E heterodimers preferentially associate with TR alpha and TR beta chains, respectively. The association of the CD247 homodimer is the last step of TcR assembly in the endoplasmic reticulum and is required for transport to the cell surface.

Its subcellular location is the cell membrane. In terms of biological role, probable non-functional open reading frame (ORF) of V region of the variable domain of T cell receptor (TR) beta chain. Non-functional ORF generally cannot participate in the synthesis of a productive T cell receptor (TR) chain due to altered V-(D)-J or switch recombination and/or splicing site (at mRNA level) and/or conserved amino acid change (protein level). Alpha-beta T cell receptors are antigen specific receptors which are essential to the immune response and are present on the cell surface of T lymphocytes. Recognize peptide-major histocompatibility (MH) (pMH) complexes that are displayed by antigen presenting cells (APC), a prerequisite for efficient T cell adaptive immunity against pathogens. Binding of alpha-beta TR to pMH complex initiates TR-CD3 clustering on the cell surface and intracellular activation of LCK that phosphorylates the ITAM motifs of CD3G, CD3D, CD3E and CD247 enabling the recruitment of ZAP70. In turn ZAP70 phosphorylates LAT, which recruits numerous signaling molecules to form the LAT signalosome. The LAT signalosome propagates signal branching to three major signaling pathways, the calcium, the mitogen-activated protein kinase (MAPK) kinase and the nuclear factor NF-kappa-B (NF-kB) pathways, leading to the mobilization of transcription factors that are critical for gene expression and essential for T cell growth and differentiation. The T cell repertoire is generated in the thymus, by V-(D)-J rearrangement. This repertoire is then shaped by intrathymic selection events to generate a peripheral T cell pool of self-MH restricted, non-autoaggressive T cells. Post-thymic interaction of alpha-beta TR with the pMH complexes shapes TR structural and functional avidity. This is Probable non-functional T cell receptor beta variable 7-3 from Homo sapiens (Human).